The sequence spans 314 residues: Oxaloacetate tautomerase FAHD2B, mitochondrial (314 aa).

A mitochondrion-targeting transit peptide spans 1-84 (MLVSGRRRLL…ATLSVARRAL (84 aa)). Mg(2+) contacts are provided by Glu-159, Glu-161, and Asp-190.

This sequence belongs to the FAH family. Requires Mg(2+) as cofactor. The cofactor is Mn(2+).

The protein localises to the mitochondrion. It catalyses the reaction oxaloacetate = enol-oxaloacetate. Tautomerase that converts enol-oxaloacetate, a strong inhibitor of succinate dehydrogenase, to the physiological keto form of oxaloacetate. It is thereby required to maximize aerobic respiration efficiency by preventing succinate dehydrogenase inhibition. The polypeptide is Oxaloacetate tautomerase FAHD2B, mitochondrial (Homo sapiens (Human)).